The following is a 204-amino-acid chain: Cytochrome c biogenesis ATP-binding export protein CcmA (204 aa).

Positions 2–202 (LEIRNVTCIR…DSNELKKIRL (201 aa)) constitute an ABC transporter domain. 34–41 (GQNGAGKT) serves as a coordination point for ATP.

Belongs to the ABC transporter superfamily. CcmA exporter (TC 3.A.1.107) family. As to quaternary structure, the complex is composed of two ATP-binding proteins (CcmA) and two transmembrane proteins (CcmB).

It localises to the cell inner membrane. The catalysed reaction is heme b(in) + ATP + H2O = heme b(out) + ADP + phosphate + H(+). Functionally, part of the ABC transporter complex CcmAB involved in the biogenesis of c-type cytochromes; once thought to export heme, this seems not to be the case, but its exact role is uncertain. Responsible for energy coupling to the transport system. The chain is Cytochrome c biogenesis ATP-binding export protein CcmA from Aliivibrio fischeri (strain ATCC 700601 / ES114) (Vibrio fischeri).